Here is a 300-residue protein sequence, read N- to C-terminus: Protease HtpX homolog (300 aa).

Helical transmembrane passes span 5-25 (IFLLTLTNIAVIFLLTLFISL) and 41-61 (TLFLFSMVVGFTGSFISLAIS). Histidine 146 provides a ligand contact to Zn(2+). Glutamate 147 is a catalytic residue. A Zn(2+)-binding site is contributed by histidine 150. 2 helical membrane-spanning segments follow: residues 161–181 (LLQGVVNTFVVFLSRIIGFFV) and 196–216 (IGFYLGMFISEIVLGLLASII). Glutamate 225 lines the Zn(2+) pocket.

The protein belongs to the peptidase M48B family. Requires Zn(2+) as cofactor.

The protein localises to the cell inner membrane. The polypeptide is Protease HtpX homolog (Methylacidiphilum infernorum (isolate V4) (Methylokorus infernorum (strain V4))).